The chain runs to 120 residues: uncharacterized protein (120 aa).

One can recognise a PRD domain in the interval 13 to 119; it reads VIDKDICKGM…YGLWMAANEE (107 aa).

This is an uncharacterized protein from Escherichia coli (strain K12).